An 847-amino-acid polypeptide reads, in one-letter code: UPF0182 protein CYB_0372 (847 aa).

7 consecutive transmembrane segments (helical) span residues 7–27 (GLFL…LAAF), 51–71 (WGLG…NICS), 76–96 (ATLA…AGSL), 141–161 (FNLV…ELGL), 168–188 (LALS…LFLI), 220–240 (LPAT…FWAL), and 259–279 (WASS…FGLL).

It belongs to the UPF0182 family.

The protein resides in the cell membrane. The sequence is that of UPF0182 protein CYB_0372 from Synechococcus sp. (strain JA-2-3B'a(2-13)) (Cyanobacteria bacterium Yellowstone B-Prime).